A 108-amino-acid chain; its full sequence is uncharacterized protein (108 aa).

Over residues 1–15 the composition is skewed to polar residues; that stretch reads MSDSNSRLVYSTQTG. The disordered stretch occupies residues 1 to 29; that stretch reads MSDSNSRLVYSTQTGRIEEPKTAPVRPKG. The span at 16-29 shows a compositional bias: basic and acidic residues; it reads RIEEPKTAPVRPKG.

Belongs to the SUI1 family.

This is an uncharacterized protein from Salmonella typhi.